The chain runs to 271 residues: Sorting nexin-11 (271 aa).

The PX domain occupies 16 to 132; sequence VITVRVQDPR…HLFLQSQLSV (117 aa). 3 residues coordinate a 1,2-diacyl-sn-glycero-3-phospho-(1D-myo-inositol-3-phosphate): R59, K85, and R99. Positions 135–139 are important for membrane trafficking; that stretch reads IEACV. A disordered region spans residues 185–271; sequence PRSGRRSSPS…PTQLDTAWDK (87 aa). Low complexity predominate over residues 213 to 230; that stretch reads SEGPSSESPTLLPSSSLP.

Belongs to the sorting nexin family. In terms of assembly, monomer. Interacts with TRPV3; this interaction promotes TRPV3 trafficking from the cell membrane to lysosome for degradation.

Its subcellular location is the cell membrane. It localises to the endosome. The protein resides in the cytoplasm. In terms of biological role, phosphoinositide-binding protein involved in protein sorting and membrane trafficking in endosomes. Regulates the levels of TRPV3 by promoting its trafficking from the cell membrane to lysosome for degradation. The chain is Sorting nexin-11 (Snx11) from Mus musculus (Mouse).